We begin with the raw amino-acid sequence, 65 residues long: Muscarinic toxin-like protein 3 (65 aa).

4 cysteine pairs are disulfide-bonded: Cys-3/Cys-24, Cys-17/Cys-41, Cys-45/Cys-57, and Cys-58/Cys-63.

Homodimer; non-covalently linked. As to expression, expressed by the venom gland.

It is found in the secreted. In terms of biological role, antagonist of muscle and neuronal nicotinic acetylcholine receptors (nAChR) with highest affinity for neuronal alpha-7/CHRNA7 nAChRs. The protein is Muscarinic toxin-like protein 3 of Naja kaouthia (Monocled cobra).